A 130-amino-acid chain; its full sequence is Small ribosomal subunit protein uS11 (130 aa).

Belongs to the universal ribosomal protein uS11 family. In terms of assembly, part of the 30S ribosomal subunit. Interacts with proteins S7 and S18. Binds to IF-3.

Functionally, located on the platform of the 30S subunit, it bridges several disparate RNA helices of the 16S rRNA. Forms part of the Shine-Dalgarno cleft in the 70S ribosome. The sequence is that of Small ribosomal subunit protein uS11 from Prochlorococcus marinus (strain MIT 9312).